Here is a 307-residue protein sequence, read N- to C-terminus: D-alanine--D-alanine ligase (307 aa).

Residues 101–301 (KDVLRAAGVP…FGELVRWMVE (201 aa)) enclose the ATP-grasp domain. 128–182 (MTPPYVVKPLGEGSSFGVIIVRADQTHPPQELTRDDWAYGDLVLVERFVAGRELT) contributes to the ATP binding site. Asp-251, Glu-268, and Asn-270 together coordinate Mg(2+).

The protein belongs to the D-alanine--D-alanine ligase family. It depends on Mg(2+) as a cofactor. Mn(2+) is required as a cofactor.

It localises to the cytoplasm. The enzyme catalyses 2 D-alanine + ATP = D-alanyl-D-alanine + ADP + phosphate + H(+). The protein operates within cell wall biogenesis; peptidoglycan biosynthesis. Functionally, cell wall formation. This is D-alanine--D-alanine ligase from Methylocella silvestris (strain DSM 15510 / CIP 108128 / LMG 27833 / NCIMB 13906 / BL2).